Reading from the N-terminus, the 296-residue chain is Probable alpha-L-glutamate ligase (296 aa).

The ATP-grasp domain maps to 104–287 (LQLLARQGID…IATLMITFIE (184 aa)). Residues Lys-141, 178-179 (EF), Asp-187, and 211-213 (RSN) contribute to the ATP site. Asp-248, Glu-260, and Asn-262 together coordinate Mg(2+). Residues Asp-248, Glu-260, and Asn-262 each contribute to the Mn(2+) site.

Belongs to the RimK family. The cofactor is Mg(2+). Mn(2+) is required as a cofactor.

In Sodalis glossinidius (strain morsitans), this protein is Probable alpha-L-glutamate ligase.